Consider the following 227-residue polypeptide: MMTKKAITVLSGGLDSCVATCVYAEDYEIHGITFNYGQKSFKQELKASEEICKKMGFTHEVIDLPWLNKISNSSLTSDNEIPTLTHEELDDLDICEDTASSVWVPGRNIVFTSIATSYAESIGAEIIIVGWDKEEAATFPDNSKEFLESFNNMLNVGSPQNIEIKAPAIDLNKDEIVKLGDEIKAPMELSYSCYTGHEKHCGVCESCMRRKRAFKLADVKDPSEYNE.

ATP is bound at residue 10-20; the sequence is LSGGLDSCVAT. Residues Cys-193, Cys-201, Cys-204, and Cys-207 each contribute to the Zn(2+) site.

The protein belongs to the QueC family. Zn(2+) serves as cofactor.

It carries out the reaction 7-carboxy-7-deazaguanine + NH4(+) + ATP = 7-cyano-7-deazaguanine + ADP + phosphate + H2O + H(+). It functions in the pathway purine metabolism; 7-cyano-7-deazaguanine biosynthesis. Functionally, catalyzes the ATP-dependent conversion of 7-carboxy-7-deazaguanine (CDG) to 7-cyano-7-deazaguanine (preQ(0)). In Methanobrevibacter smithii (strain ATCC 35061 / DSM 861 / OCM 144 / PS), this protein is 7-cyano-7-deazaguanine synthase.